A 472-amino-acid chain; its full sequence is uncharacterized protein (472 aa).

The protein resides in the mitochondrion. This is an uncharacterized protein from Saccharomyces cerevisiae (strain ATCC 204508 / S288c) (Baker's yeast).